The chain runs to 303 residues: Taste receptor type 2 member 13 (303 aa).

The Extracellular portion of the chain corresponds to 1–7 (MESALPS). Residues 8 to 28 (ILTLVIIAEFIIGNLSNGFIV) form a helical membrane-spanning segment. Topologically, residues 29–55 (LINYIDWVSKRELSSVDKLLIILAISR) are cytoplasmic. Residues 56 to 76 (IGLIWEILVSWFLALHYLAIF) traverse the membrane as a helical segment. Residues 77 to 85 (VSGTGLRIM) lie on the Extracellular side of the membrane. A helical membrane pass occupies residues 86–106 (IFSWIVSNHFSLWLATILSIF). The Cytoplasmic portion of the chain corresponds to 107–128 (YLLKIASFSSPAFLYLKWRVNK). A helical transmembrane segment spans residues 129 to 149 (VILMILLGSLVFLFLNLIQIN). At 150-184 (IHIKDWLDRYEGNTTWNFSMSDFVTFSVSVKFTMT) the chain is on the extracellular side. N-linked (GlcNAc...) asparagine glycans are attached at residues N162 and N166. A helical transmembrane segment spans residues 185-205 (MFSLTPFTVALISFSLLIFSL). The Cytoplasmic portion of the chain corresponds to 206-232 (QKHLQKMQLNYKGHREPRTKVHTNALK). Residues 233–253 (IVISFLLLYASFFLCILISWI) form a helical membrane-spanning segment. Over 254-261 (SELYQNTA) the chain is Extracellular. The helical transmembrane segment at 262-282 (IYMLCETIGLFYPSSHSFLLI) threads the bilayer. The Cytoplasmic portion of the chain corresponds to 283-303 (LGNPKLRQAFLLVAAKVWAKR).

This sequence belongs to the G-protein coupled receptor T2R family.

It is found in the membrane. Its function is as follows. Receptor that may play a role in the perception of bitterness and is gustducin-linked. May play a role in sensing the chemical composition of the gastrointestinal content. The activity of this receptor may stimulate alpha gustducin, mediate PLC-beta-2 activation and lead to the gating of TRPM5. The sequence is that of Taste receptor type 2 member 13 (TAS2R13) from Pongo pygmaeus (Bornean orangutan).